The following is a 589-amino-acid chain: Protein MICRORCHIDIA 3 (589 aa).

The tract at residues 1–33 is disordered; the sequence is MAPESKNAGVSVVVNLDSDSDSDNDDGVGGRGA. Residues 542–589 adopt a coiled-coil conformation; that stretch reads MRCEEYVKKETELEQTVSNLAKELEETKSKCARLALLVDAKRREMQQV.

It belongs to the MORC ATPase protein family. In terms of assembly, homodimer and heterodimer. Component of an RNA-directed DNA methylation (RdDM) complex. The cofactor is Mg(2+). It depends on Mn(2+) as a cofactor.

It localises to the nucleus. Exhibits ATPase activity. Binds DNA/RNA in a non-specific manner and exhibits endonuclease activity. Probably involved in DNA repair. Involved in RNA-directed DNA methylation (RdDM) as a component of the RdDM machinery and required for gene silencing. May also be involved in the regulation of chromatin architecture to maintain gene silencing. This Arabidopsis thaliana (Mouse-ear cress) protein is Protein MICRORCHIDIA 3.